The following is a 353-amino-acid chain: 4-hydroxy-2-oxovalerate aldolase 2 (353 aa).

Residues 14–266 form the Pyruvate carboxyltransferase domain; sequence VRMTDTSLRD…KTGIDFFDIA (253 aa). 22–23 contributes to the substrate binding site; sequence RD. D23 provides a ligand contact to Mn(2+). Catalysis depends on H26, which acts as the Proton acceptor. Residues S176 and H205 each contribute to the substrate site. H205 and H207 together coordinate Mn(2+). Residue Y296 participates in substrate binding.

This sequence belongs to the 4-hydroxy-2-oxovalerate aldolase family.

It carries out the reaction (S)-4-hydroxy-2-oxopentanoate = acetaldehyde + pyruvate. This Mycobacterium sp. (strain JLS) protein is 4-hydroxy-2-oxovalerate aldolase 2.